The primary structure comprises 414 residues: Enolase (414 aa).

Glutamine 162 is a (2R)-2-phosphoglycerate binding site. The Proton donor role is filled by glutamate 204. The Mg(2+) site is built by aspartate 239, glutamate 280, and aspartate 307. Residues lysine 332, arginine 361, serine 362, and lysine 383 each contribute to the (2R)-2-phosphoglycerate site. Lysine 332 serves as the catalytic Proton acceptor.

It belongs to the enolase family. Mg(2+) is required as a cofactor.

It localises to the cytoplasm. It is found in the secreted. The protein localises to the cell surface. The catalysed reaction is (2R)-2-phosphoglycerate = phosphoenolpyruvate + H2O. It participates in carbohydrate degradation; glycolysis; pyruvate from D-glyceraldehyde 3-phosphate: step 4/5. Its function is as follows. Catalyzes the reversible conversion of 2-phosphoglycerate (2-PG) into phosphoenolpyruvate (PEP). It is essential for the degradation of carbohydrates via glycolysis. In Campylobacter jejuni subsp. doylei (strain ATCC BAA-1458 / RM4099 / 269.97), this protein is Enolase.